Reading from the N-terminus, the 471-residue chain is Nitrosourea synthase (471 aa).

The segment at 177–328 (MWLVQFAPDF…GRMAREKIIK (152 aa)) is HO-like. E189, E215, H225, E281, H311, D315, H318, H407, H409, and H448 together coordinate Fe(2+). The interval 397–459 (VEPRGELSNT…ANIESDECVY (63 aa)) is cupin.

In terms of assembly, homodimer. The cofactor is Fe(2+).

It carries out the reaction N(omega)-methyl-L-arginine + 2 NADH + 3 O2 + H(+) = N(delta)-hydroxy-N(omega)-methyl-N(omega)-nitroso-L-citrulline + 2 NAD(+) + 3 H2O. The catalysed reaction is N(omega)-methyl-L-arginine + NADH + O2 + H(+) = N(delta)-hydroxy-N(omega)-methyl-L-arginine + NAD(+) + H2O. It catalyses the reaction N(delta)-hydroxy-N(omega)-methyl-L-arginine + NADH + O2 = N(delta),N(omega')-dihydroxy-N(omega)-methyl-L-arginine + NAD(+) + H2O. The enzyme catalyses N(delta),N(omega')-dihydroxy-N(omega)-methyl-L-arginine + O2 = N(delta)-hydroxy-N(omega)-methyl-N(omega)-nitroso-L-citrulline + H2O. It carries out the reaction 2 N(delta)-hydroxy-N(omega)-methyl-N(omega)-nitroso-L-citrulline + AH2 = 2 N(delta)-hydroxy-N(omega)-methyl-L-citrulline + 2 nitric oxide + A. It functions in the pathway antibiotic biosynthesis. In terms of biological role, involved in the biosynthesis of the glucosamine-nitrosourea antibiotic streptozotocin (SZN). Catalyzes a complex multi-step reaction: the overall reaction is an oxidative rearrangement of the guanidine group of N(omega)-methyl-L-arginine (L-NMA), generating an N-nitrosourea product. SznF first hydroxylates L-NMA to form N(delta)-hydroxy-N(omega)-methyl-L-arginine (L-HMA), which is further hydroxylated to give N(delta)-hydroxy-N(omega)-hydroxy-N(omega)-methyl-L-arginine (L-DHMA). Subsequently, an oxidative rearrangement converts this intermediate to N(delta)-hydroxy-N(omega)-methyl-N(omega)-nitroso-L-citrulline. This product is unstable, and degrades non-enzymically into nitric oxide and the denitrosated product N(delta)-hydroxy-N(omega)-methyl-L-citrulline. The polypeptide is Nitrosourea synthase (Streptomyces achromogenes subsp. streptozoticus).